Reading from the N-terminus, the 487-residue chain is Serine/threonine-protein kinase BSK8 (487 aa).

Glycine 2 carries the N-myristoyl glycine lipid modification. Position 20 is a phosphoserine (serine 20). One can recognise a Protein kinase domain in the interval 59–325 (ENIVSEHGER…DLEIASHQLL (267 aa)). ATP contacts are provided by residues 65–73 (HGERAPNVV), asparagine 71, lysine 87, and 133–135 (EFM). The Proton acceptor role is filled by aspartate 181. Residues 185-186 (YR) and asparagine 205 contribute to the ATP site. Serine 213 carries the phosphoserine modification.

The protein belongs to the protein kinase superfamily. Ser/Thr protein kinase family. As to quaternary structure, interacts with ASK7/BIN2, BSK1, BSK5, BSK6 and BSK11. Interacts with BSL2. In terms of processing, phosphorylated by BRI1, ASK7/BIN2 and ASK9/BIL2.

Its subcellular location is the cell membrane. It catalyses the reaction L-seryl-[protein] + ATP = O-phospho-L-seryl-[protein] + ADP + H(+). It carries out the reaction L-threonyl-[protein] + ATP = O-phospho-L-threonyl-[protein] + ADP + H(+). In terms of biological role, probable serine/threonine kinase that acts as a positive regulator of brassinosteroid (BR) signaling downstream of the receptor kinase BRI1. Functions redundantly with BSK3, BSK4, BSK6 and BSK7. Involved in the regulation of sucrose-phosphate synthase 1 (SPS1) in the context of sucrose resuply after starvation. Activates BSL2, a phosphatase that may dephosphorylate SPS1, leading to the activation of SPS1. The chain is Serine/threonine-protein kinase BSK8 from Arabidopsis thaliana (Mouse-ear cress).